Here is an 88-residue protein sequence, read N- to C-terminus: Small ribosomal subunit protein uS17 (88 aa).

This sequence belongs to the universal ribosomal protein uS17 family. Part of the 30S ribosomal subunit.

Its function is as follows. One of the primary rRNA binding proteins, it binds specifically to the 5'-end of 16S ribosomal RNA. The protein is Small ribosomal subunit protein uS17 of Pseudomonas putida (strain ATCC 700007 / DSM 6899 / JCM 31910 / BCRC 17059 / LMG 24140 / F1).